The sequence spans 334 residues: MATIKDVAKMAGVSTTTVSHVINKTRHVADETKQTVLDAIKALNYSPSAVARSLKVNTTKSIGMVVTTSETPYFAEIIHAVEEQCYRQGYSLFLCNTQNDPDKLKNHLEMLAKKRVDGVLVMCSEYKDDSRDLLKSFSYLPIVIMDWGPVNPDTDLILDNSFEGGYLAGKHLVDNGHKKIGYLSAELTKVTAKQRYQGFIKALSEANVEMKSEWLFEGSFEPEDGYECMNRLLALEDRPTAVFCCNDIMALGAISAITEKGYRVPDDFSVIGYDNVHSSRFFAPPLTTIHQSKARLGERALRLLFERIAHKDAKRETIEIHPELVIRKSVKKIA.

Residues 2–56 (ATIKDVAKMAGVSTTTVSHVINKTRHVADETKQTVLDAIKALNYSPSAVARSLKV) enclose the HTH lacI-type domain. Residues 4–23 (IKDVAKMAGVSTTTVSHVIN) constitute a DNA-binding region (H-T-H motif). A DNA-binding region spans residues 48 to 56 (SAVARSLKV). Hypoxanthine-binding residues include Tyr73, Lys189, Thr191, Phe220, and Asp274.

Homodimer.

It functions in the pathway purine metabolism; purine nucleotide biosynthesis [regulation]. Functionally, is the main repressor of the genes involved in the de novo synthesis of purine nucleotides, regulating purB, purC, purEK, purF, purHD, purL, purMN and guaBA expression. PurR is allosterically activated to bind its cognate DNA by binding the purine corepressors, hypoxanthine or guanine, thereby effecting transcription repression. In Mannheimia succiniciproducens (strain KCTC 0769BP / MBEL55E), this protein is HTH-type transcriptional repressor PurR.